The primary structure comprises 118 residues: Hydrogenase maturation factor HypA (118 aa).

His2 lines the Ni(2+) pocket. Cys73, Cys76, Cys90, and Cys93 together coordinate Zn(2+).

It belongs to the HypA/HybF family.

Involved in the maturation of [NiFe] hydrogenases. Required for nickel insertion into the metal center of the hydrogenase. In Salmonella typhi, this protein is Hydrogenase maturation factor HypA.